The primary structure comprises 359 residues: Fructose-bisphosphate aldolase (359 aa).

Ser-50 is a D-glyceraldehyde 3-phosphate binding site. The active-site Proton donor is Asp-83. 4 residues coordinate Zn(2+): His-84, Asp-105, Glu-142, and His-198. Residue Gly-199 coordinates dihydroxyacetone phosphate. His-232 lines the Zn(2+) pocket. Dihydroxyacetone phosphate contacts are provided by residues 233–235 (GSS) and 275–278 (NIDT).

The protein belongs to the class II fructose-bisphosphate aldolase family. Zn(2+) serves as cofactor.

The enzyme catalyses beta-D-fructose 1,6-bisphosphate = D-glyceraldehyde 3-phosphate + dihydroxyacetone phosphate. The protein operates within carbohydrate degradation; glycolysis; D-glyceraldehyde 3-phosphate and glycerone phosphate from D-glucose: step 4/4. In terms of biological role, catalyzes the aldol condensation of dihydroxyacetone phosphate (DHAP or glycerone-phosphate) with glyceraldehyde 3-phosphate (G3P) to form fructose 1,6-bisphosphate (FBP) in gluconeogenesis and the reverse reaction in glycolysis. The protein is Fructose-bisphosphate aldolase (fba) of Nostoc commune.